The chain runs to 485 residues: MSLFDHTVSELHTLLQKKEVSISDLVDESYRRIGEVEEKVQAFLTLNEEQARAKAKELDDKLAKGEETNPLFGLPIGIKDNIVTKGLRTTCASKILYNFDPIYDATVMERLNAAGAITIGKLNMDEFAMGSSTENSGFQLTRNPWDLERVPGGSSGGSAAAVAAGEVPFSLGSDTGGSIRQPAAFCGVVGLKPTYGRVSRFGLVAFASSLDQIGPITRTVEDNAYLLQVIAGVDPMDSTSANIDVPNYVEALTGDIKGLKIAVPKEYLGEGVAEEVRQSVLAALSVLEKLGATWEEVSLPHSKYALATYYLLASSEASANLARFDGVRYGYRTDNAKNLIDMYKQTRSEGFGSEVKRRIMLGTFALSSGYYDAYYKKAQKVRTLIKRDFENVFEQYDVIIGPTTPTPAFKIGEKTSDPLTMYMNDILTIPVNLAGVPAISVPCGFVDGLPVGLQIIGKHFDESTVYRVAHAFEQATDYHKQKPVL.

Active-site charge relay system residues include Lys-79 and Ser-154. Catalysis depends on Ser-178, which acts as the Acyl-ester intermediate.

Belongs to the amidase family. GatA subfamily. In terms of assembly, heterotrimer of A, B and C subunits.

The enzyme catalyses L-glutamyl-tRNA(Gln) + L-glutamine + ATP + H2O = L-glutaminyl-tRNA(Gln) + L-glutamate + ADP + phosphate + H(+). Allows the formation of correctly charged Gln-tRNA(Gln) through the transamidation of misacylated Glu-tRNA(Gln) in organisms which lack glutaminyl-tRNA synthetase. The reaction takes place in the presence of glutamine and ATP through an activated gamma-phospho-Glu-tRNA(Gln). The sequence is that of Glutamyl-tRNA(Gln) amidotransferase subunit A from Geobacillus thermodenitrificans (strain NG80-2).